The following is a 314-amino-acid chain: tRNA dimethylallyltransferase (314 aa).

16–23 contributes to the ATP binding site; the sequence is GPTGVGKT. 18-23 contacts substrate; sequence TGVGKT. Residues 41-44 are interaction with substrate tRNA; the sequence is DSMQ.

This sequence belongs to the IPP transferase family. In terms of assembly, monomer. The cofactor is Mg(2+).

It carries out the reaction adenosine(37) in tRNA + dimethylallyl diphosphate = N(6)-dimethylallyladenosine(37) in tRNA + diphosphate. Its function is as follows. Catalyzes the transfer of a dimethylallyl group onto the adenine at position 37 in tRNAs that read codons beginning with uridine, leading to the formation of N6-(dimethylallyl)adenosine (i(6)A). In Desulfosudis oleivorans (strain DSM 6200 / JCM 39069 / Hxd3) (Desulfococcus oleovorans), this protein is tRNA dimethylallyltransferase.